We begin with the raw amino-acid sequence, 448 residues long: Probable D-serine dehydratase (448 aa).

Position 119 is an N6-(pyridoxal phosphate)lysine (Lys119).

It belongs to the serine/threonine dehydratase family. DsdA subfamily. It depends on pyridoxal 5'-phosphate as a cofactor.

It catalyses the reaction D-serine = pyruvate + NH4(+). This chain is Probable D-serine dehydratase, found in Chromobacterium violaceum (strain ATCC 12472 / DSM 30191 / JCM 1249 / CCUG 213 / NBRC 12614 / NCIMB 9131 / NCTC 9757 / MK).